The chain runs to 120 residues: Aspartate 1-decarboxylase (120 aa).

Residue Ser-25 is the Schiff-base intermediate with substrate; via pyruvic acid of the active site. At Ser-25 the chain carries Pyruvic acid (Ser). Position 57 (Thr-57) interacts with substrate. Tyr-58 acts as the Proton donor in catalysis. 73-75 (GAA) provides a ligand contact to substrate.

The protein belongs to the PanD family. In terms of assembly, heterooctamer of four alpha and four beta subunits. Pyruvate is required as a cofactor. Is synthesized initially as an inactive proenzyme, which is activated by self-cleavage at a specific serine bond to produce a beta-subunit with a hydroxyl group at its C-terminus and an alpha-subunit with a pyruvoyl group at its N-terminus.

It localises to the cytoplasm. It catalyses the reaction L-aspartate + H(+) = beta-alanine + CO2. It functions in the pathway cofactor biosynthesis; (R)-pantothenate biosynthesis; beta-alanine from L-aspartate: step 1/1. Functionally, catalyzes the pyruvoyl-dependent decarboxylation of aspartate to produce beta-alanine. This Methylibium petroleiphilum (strain ATCC BAA-1232 / LMG 22953 / PM1) protein is Aspartate 1-decarboxylase.